Consider the following 56-residue polypeptide: MSRKIILIKQELLLLVYELNRSGLLAENEKIRPILAQLEKLLLCDLSPSTNDSVKN.

Its function is as follows. No function has yet been ascribed to K protein. The polypeptide is K protein (K) (Salmonella (Bacteriophage S13)).